Consider the following 411-residue polypeptide: Flagellum-associated coiled-coil domain-containing protein 1 (411 aa).

A disordered region spans residues 52–77 (SQPAKSTAFPRDKAQSRKLEESNKAP). Residues 61–74 (PRDKAQSRKLEESN) show a composition bias toward basic and acidic residues. Coiled-coil stretches lie at residues 124–220 (SDII…LKNM) and 278–328 (NESF…VVLE). K353 bears the N6-acetyllysine mark. Positions 355–385 (FQTKLAEAEEKYKSTIQVLTEENNSLRQKVL) form a coiled coil.

It localises to the cytoplasm. It is found in the cytoplasmic granule. The protein localises to the cell projection. The protein resides in the cilium. Its subcellular location is the flagellum. In Rattus norvegicus (Rat), this protein is Flagellum-associated coiled-coil domain-containing protein 1.